Consider the following 220-residue polypeptide: Fructose-6-phosphate aldolase (220 aa).

Lys85 acts as the Schiff-base intermediate with substrate in catalysis.

Belongs to the transaldolase family. Type 3A subfamily. In terms of assembly, homodecamer.

It is found in the cytoplasm. The enzyme catalyses beta-D-fructose 6-phosphate = dihydroxyacetone + D-glyceraldehyde 3-phosphate. Catalyzes the reversible formation of fructose 6-phosphate from dihydroxyacetone and D-glyceraldehyde 3-phosphate via an aldolization reaction. This chain is Fructose-6-phosphate aldolase, found in Klebsiella pneumoniae subsp. pneumoniae (strain ATCC 700721 / MGH 78578).